A 293-amino-acid chain; its full sequence is Elongation factor Ts (293 aa).

The interval 80-83 (TDFV) is involved in Mg(2+) ion dislocation from EF-Tu.

Belongs to the EF-Ts family.

The protein localises to the cytoplasm. Functionally, associates with the EF-Tu.GDP complex and induces the exchange of GDP to GTP. It remains bound to the aminoacyl-tRNA.EF-Tu.GTP complex up to the GTP hydrolysis stage on the ribosome. This Paraburkholderia xenovorans (strain LB400) protein is Elongation factor Ts.